We begin with the raw amino-acid sequence, 518 residues long: Protein nucleotidyltransferase YdiU (518 aa).

Residues G100, G102, R103, K123, D135, G136, R193, and R200 each coordinate ATP. D270 acts as the Proton acceptor in catalysis. Residues N271 and D280 each contribute to the Mg(2+) site. D280 provides a ligand contact to ATP.

This sequence belongs to the SELO family. Mg(2+) serves as cofactor. It depends on Mn(2+) as a cofactor.

The catalysed reaction is L-seryl-[protein] + ATP = 3-O-(5'-adenylyl)-L-seryl-[protein] + diphosphate. It catalyses the reaction L-threonyl-[protein] + ATP = 3-O-(5'-adenylyl)-L-threonyl-[protein] + diphosphate. It carries out the reaction L-tyrosyl-[protein] + ATP = O-(5'-adenylyl)-L-tyrosyl-[protein] + diphosphate. The enzyme catalyses L-histidyl-[protein] + UTP = N(tele)-(5'-uridylyl)-L-histidyl-[protein] + diphosphate. The catalysed reaction is L-seryl-[protein] + UTP = O-(5'-uridylyl)-L-seryl-[protein] + diphosphate. It catalyses the reaction L-tyrosyl-[protein] + UTP = O-(5'-uridylyl)-L-tyrosyl-[protein] + diphosphate. In terms of biological role, nucleotidyltransferase involved in the post-translational modification of proteins. It can catalyze the addition of adenosine monophosphate (AMP) or uridine monophosphate (UMP) to a protein, resulting in modifications known as AMPylation and UMPylation. This is Protein nucleotidyltransferase YdiU from Xanthomonas oryzae pv. oryzae (strain MAFF 311018).